The sequence spans 177 residues: 2-C-methyl-D-erythritol 2,4-cyclodiphosphate synthase (177 aa).

Residues Asp23 and His25 each coordinate a divalent metal cation. 4-CDP-2-C-methyl-D-erythritol 2-phosphate contacts are provided by residues 23 to 25 (DVH) and 49 to 50 (HS). His57 contacts a divalent metal cation. Residues 71 to 73 (DIG), 76 to 80 (FSDTD), 115 to 121 (AQAPRMA), and Arg157 each bind 4-CDP-2-C-methyl-D-erythritol 2-phosphate.

This sequence belongs to the IspF family. As to quaternary structure, homotrimer. A divalent metal cation is required as a cofactor.

The catalysed reaction is 4-CDP-2-C-methyl-D-erythritol 2-phosphate = 2-C-methyl-D-erythritol 2,4-cyclic diphosphate + CMP. It participates in isoprenoid biosynthesis; isopentenyl diphosphate biosynthesis via DXP pathway; isopentenyl diphosphate from 1-deoxy-D-xylulose 5-phosphate: step 4/6. Involved in the biosynthesis of isopentenyl diphosphate (IPP) and dimethylallyl diphosphate (DMAPP), two major building blocks of isoprenoid compounds. Catalyzes the conversion of 4-diphosphocytidyl-2-C-methyl-D-erythritol 2-phosphate (CDP-ME2P) to 2-C-methyl-D-erythritol 2,4-cyclodiphosphate (ME-CPP) with a corresponding release of cytidine 5-monophosphate (CMP). The sequence is that of 2-C-methyl-D-erythritol 2,4-cyclodiphosphate synthase from Nitrosospira multiformis (strain ATCC 25196 / NCIMB 11849 / C 71).